The sequence spans 65 residues: Large ribosomal subunit protein bL35 (65 aa).

This sequence belongs to the bacterial ribosomal protein bL35 family.

This chain is Large ribosomal subunit protein bL35, found in Thermotoga petrophila (strain ATCC BAA-488 / DSM 13995 / JCM 10881 / RKU-1).